The chain runs to 240 residues: LexA repressor (240 aa).

A DNA-binding region (H-T-H motif) is located at residues 26 to 46 (FDEMKEALDLASKSGIHRLIT). Catalysis depends on for autocatalytic cleavage activity residues Ser-161 and Lys-199.

Belongs to the peptidase S24 family. As to quaternary structure, homodimer.

It catalyses the reaction Hydrolysis of Ala-|-Gly bond in repressor LexA.. In terms of biological role, represses a number of genes involved in the response to DNA damage (SOS response), including recA and lexA. In the presence of single-stranded DNA, RecA interacts with LexA causing an autocatalytic cleavage which disrupts the DNA-binding part of LexA, leading to derepression of the SOS regulon and eventually DNA repair. This is LexA repressor from Brucella melitensis biotype 1 (strain ATCC 23456 / CCUG 17765 / NCTC 10094 / 16M).